We begin with the raw amino-acid sequence, 271 residues long: 3-methyl-2-oxobutanoate hydroxymethyltransferase (271 aa).

Residues Asp53 and Asp92 each coordinate Mg(2+). Residues 53–54 (DS), Asp92, and Lys120 contribute to the 3-methyl-2-oxobutanoate site. Position 122 (Glu122) interacts with Mg(2+). The active-site Proton acceptor is Glu189.

It belongs to the PanB family. In terms of assembly, homodecamer; pentamer of dimers. The cofactor is Mg(2+).

Its subcellular location is the cytoplasm. The enzyme catalyses 3-methyl-2-oxobutanoate + (6R)-5,10-methylene-5,6,7,8-tetrahydrofolate + H2O = 2-dehydropantoate + (6S)-5,6,7,8-tetrahydrofolate. It participates in cofactor biosynthesis; (R)-pantothenate biosynthesis; (R)-pantoate from 3-methyl-2-oxobutanoate: step 1/2. Its function is as follows. Catalyzes the reversible reaction in which hydroxymethyl group from 5,10-methylenetetrahydrofolate is transferred onto alpha-ketoisovalerate to form ketopantoate. This chain is 3-methyl-2-oxobutanoate hydroxymethyltransferase, found in Burkholderia thailandensis (strain ATCC 700388 / DSM 13276 / CCUG 48851 / CIP 106301 / E264).